A 288-amino-acid chain; its full sequence is Proteasome assembly chaperone 1 (288 aa).

At alanine 2 the chain carries N-acetylalanine. The segment at 13–35 is disordered; sequence PCRAGTEDEEEEEEGRRETPEDR. Threonine 18 carries the post-translational modification Phosphothreonine. Over residues 26–35 the composition is skewed to basic and acidic residues; the sequence is EGRRETPEDR. Position 54 is a phosphothreonine (threonine 54). Serine 180 carries the post-translational modification Phosphoserine. Lysine 264 carries the post-translational modification N6-acetyllysine.

Belongs to the PSMG1 family. Forms a heterodimer with PSMG2. The PSMG1-PSMG2 heterodimer interacts directly with the PSMA5 and PSMA7 proteasome alpha subunits. In terms of processing, degraded by the proteasome upon completion of 20S proteasome maturation. In terms of tissue distribution, in the adult, detected in brain, colon, leukocytes, breast and testis. Widely expressed in the fetus. Also expressed in a variety of proliferating cell lines.

The protein resides in the cytoplasm. The protein localises to the endoplasmic reticulum. Chaperone protein which promotes assembly of the 20S proteasome as part of a heterodimer with PSMG2. The PSMG1-PSMG2 heterodimer binds to the PSMA5 and PSMA7 proteasome subunits, promotes assembly of the proteasome alpha subunits into the heteroheptameric alpha ring and prevents alpha ring dimerization. The polypeptide is Proteasome assembly chaperone 1 (Homo sapiens (Human)).